The primary structure comprises 422 residues: Retinoic acid receptor RXR-beta-B (422 aa).

The tract at residues 1–89 is modulating; it reads MNSLPPSTSA…SGPMLSQKRM (89 aa). 2 NR C4-type zinc fingers span residues 90–110 and 126–150; these read CAIC…CEGC and CRDN…YQKC. Positions 90–155 form a DNA-binding region, nuclear receptor; it reads CAICGDRSSG…RYQKCLAMGM (66 aa). A hinge region spans residues 156-178; that stretch reads KREAVQEERQKNKERDGDYECSS. Residues 161–173 show a composition bias toward basic and acidic residues; it reads QEERQKNKERDGD. The disordered stretch occupies residues 161-182; that stretch reads QEERQKNKERDGDYECSSSANE. An NR LBD domain is found at 181–421; it reads NEEMPVEKIL…TFLMEMLESP (241 aa).

The protein belongs to the nuclear hormone receptor family. NR2 subfamily. Homodimer. Heterodimer; with a rar molecule. Binds DNA preferentially as a rar/rxr heterodimer. Heterodimerizes with rarga. Shows uniform expression from the blastula to mid-gastrula stages. At 12 hours post-fertilization (hpf), expressed ubiquitously but more weakly. At 24 hpf, restricted to the ventral diencephalon, pharangeal endoderm and trunk and tail mesoderm; mesoderm expression is in medial cells of each somite along the dorsoventral axis, forming stripes. At 48 hpf, expressed in forebrain, eye, midbrain and anterior hindbrain.

The protein localises to the nucleus. Its function is as follows. Receptor for retinoic acid. Retinoic acid receptors bind as heterodimers to their target response elements in response to their ligands, all-trans or 9-cis retinoic acid, and regulate gene expression in various biological processes. The rar/rxr heterodimers bind to the retinoic acid response elements (RARE) composed of tandem 5'-AGGTCA-3' sites known as DR1-DR5. The high affinity ligand for rxrs is 9-cis retinoic acid. The chain is Retinoic acid receptor RXR-beta-B (rxrbb) from Danio rerio (Zebrafish).